The chain runs to 355 residues: 3-dehydroquinate synthase (355 aa).

NAD(+)-binding positions include 105 to 109 (GVVGD), 129 to 130 (TS), Lys142, Lys151, and 169 to 172 (TLKT). The Zn(2+) site is built by Glu184, His246, and His263.

Belongs to the sugar phosphate cyclases superfamily. Dehydroquinate synthase family. The cofactor is NAD(+). It depends on Co(2+) as a cofactor. Zn(2+) serves as cofactor.

Its subcellular location is the cytoplasm. It carries out the reaction 7-phospho-2-dehydro-3-deoxy-D-arabino-heptonate = 3-dehydroquinate + phosphate. Its pathway is metabolic intermediate biosynthesis; chorismate biosynthesis; chorismate from D-erythrose 4-phosphate and phosphoenolpyruvate: step 2/7. Functionally, catalyzes the conversion of 3-deoxy-D-arabino-heptulosonate 7-phosphate (DAHP) to dehydroquinate (DHQ). The polypeptide is 3-dehydroquinate synthase (Streptococcus agalactiae serotype III (strain NEM316)).